A 126-amino-acid polypeptide reads, in one-letter code: Cystatin-like cysteine protease inhibitor EPIC1 (126 aa).

The first 21 residues, Met-1 to Ala-21, serve as a signal peptide directing secretion. An N-linked (GlcNAc...) asparagine glycan is attached at Asn-46. The Secondary area of contact motif lies at Gln-69 to Gly-73.

Belongs to the cystatin family. Interacts with the host papain-like cysteine protease RCR3. Interacts with the host papain-like cysteine protease C14.

The protein localises to the secreted. Secreted effector that interacts with and inhibits the pathogenesis-related papain-like cysteine proteases C14 and RCR3 of host plants. Inhibition of host proteases by a pathogen extracellular protease inhibitor forms a specific type of defense-counterdefense mechanism between plants and microbial pathogens. The protein is Cystatin-like cysteine protease inhibitor EPIC1 of Phytophthora infestans (Potato late blight agent).